Reading from the N-terminus, the 404-residue chain is tRNA pseudouridine(31) synthase (404 aa).

The active site involves aspartate 168.

It belongs to the pseudouridine synthase RluA family.

The protein localises to the cytoplasm. The protein resides in the mitochondrion. The catalysed reaction is uridine(31) in tRNA = pseudouridine(31) in tRNA. Catalyzes the formation of pseudouridine at position 31 in the psi GC loop of tRNAS. The chain is tRNA pseudouridine(31) synthase (PUS6) from Saccharomyces cerevisiae (strain ATCC 204508 / S288c) (Baker's yeast).